We begin with the raw amino-acid sequence, 113 residues long: MVLDTKRSLKIKIDALKRLEKDYMLYKKEEQLQIENVERFKADETKDIYDVKKQIEILDENKTMIIDSVSRVTAFLVQFSEFLEEHKNEDDGSEIWKDSYDIIDQISTKFLGE.

The protein belongs to the TBCA family. As to quaternary structure, supercomplex made of cofactors A to E. Cofactors A and D function by capturing and stabilizing tubulin in a quasi-native conformation. Cofactor E binds to the cofactor D-tubulin complex; interaction with cofactor C then causes the release of tubulin polypeptides that are committed to the native state.

The protein resides in the cytoplasm. It is found in the cytoskeleton. Functionally, tubulin-folding protein; involved in the early step of the tubulin folding pathway. The protein is Tubulin-specific chaperone A (tbca) of Dictyostelium discoideum (Social amoeba).